We begin with the raw amino-acid sequence, 606 residues long: Peptide-N(4)-(N-acetyl-beta-glucosaminyl)asparagine amidase (606 aa).

The Thioredoxin domain maps to 2–108; it reads PVTEVGSLPE…IAEKIRQHYS (107 aa). Positions 191, 194, 225, and 228 each coordinate Zn(2+). The active-site Nucleophile is the Cys251. Residues His278 and Asp295 contribute to the active site. Positions 404 to 606 constitute a PAW domain; sequence DLGGRITGSE…SFSVKIWMKN (203 aa).

It belongs to the transglutaminase-like superfamily. PNGase family. The cofactor is Zn(2+).

Its subcellular location is the cytoplasm. The protein localises to the endoplasmic reticulum. The enzyme catalyses Hydrolysis of an N(4)-(acetyl-beta-D-glucosaminyl)asparagine residue in which the glucosamine residue may be further glycosylated, to yield a (substituted) N-acetyl-beta-D-glucosaminylamine and a peptide containing an aspartate residue.. Its activity is regulated as follows. Inhibited by Zn(2+) and z-VAD-fmk (caspase inhibitor) but unaffected by EDTA. Specifically deglycosylates the denatured form of N-linked glycoproteins in the cytoplasm and assists their proteasome-mediated degradation. Cleaves the beta-aspartyl-glucosamine (GlcNAc) of the glycan and the amide side chain of Asn, converting Asn to Asp. Prefers proteins containing high-mannose over those bearing complex type oligosaccharides. Can recognize misfolded proteins in the endoplasmic reticulum that are exported to the cytosol to be destroyed and deglycosylate them, while it has no activity toward native proteins. Deglycosylation is a prerequisite for subsequent proteasome-mediated degradation of some, but not all, misfolded glycoproteins. Also displays oxidoreductase (thioredoxin) activity. Involved in regulating the expression of proteasomal subunits such as rpt-3 in order to confer resistance to proteasomal dysfunction. The sequence is that of Peptide-N(4)-(N-acetyl-beta-glucosaminyl)asparagine amidase (png-1) from Caenorhabditis elegans.